A 332-amino-acid chain; its full sequence is Galactinol synthase 7 (332 aa).

Lysine 101 is an active-site residue. Aspartate 117, aspartate 119, and histidine 255 together coordinate Mn(2+).

The protein belongs to the glycosyltransferase 8 family. Galactosyltransferase subfamily. It depends on a divalent metal cation as a cofactor.

It is found in the cytoplasm. It catalyses the reaction myo-inositol + UDP-alpha-D-galactose = alpha-D-galactosyl-(1-&gt;3)-1D-myo-inositol + UDP + H(+). In terms of biological role, galactinol synthase involved in the biosynthesis of raffinose family oligosaccharides (RFOs) that function as osmoprotectants. May promote plant stress tolerance. This Arabidopsis thaliana (Mouse-ear cress) protein is Galactinol synthase 7 (GOLS7).